Here is a 303-residue protein sequence, read N- to C-terminus: Monoglyceride lipase (303 aa).

Thr-10 is modified (phosphothreonine). Tyr-58 carries the post-translational modification 3'-nitrotyrosine. Ser-122 serves as the catalytic Nucleophile. Phosphoserine is present on Ser-189. Active-site charge relay system residues include Asp-239 and His-269.

Belongs to the AB hydrolase superfamily. Monoacylglycerol lipase family. As to quaternary structure, homodimer. Ubiquitous.

The protein resides in the cytoplasm. The protein localises to the cytosol. It is found in the membrane. It catalyses the reaction Hydrolyzes glycerol monoesters of long-chain fatty acids.. The catalysed reaction is a 1-acylglycerol + H2O = glycerol + a fatty acid + H(+). The enzyme catalyses a 2-acylglycerol + H2O = glycerol + a fatty acid + H(+). It carries out the reaction 2-(5Z,8Z,11Z,14Z-eicosatetraenoyl)-glycerol + H2O = glycerol + (5Z,8Z,11Z,14Z)-eicosatetraenoate + H(+). It catalyses the reaction 1-octanoylglycerol + H2O = octanoate + glycerol + H(+). The catalysed reaction is 1-decanoylglycerol + H2O = decanoate + glycerol + H(+). The enzyme catalyses 1-dodecanoylglycerol + H2O = dodecanoate + glycerol + H(+). It carries out the reaction 1-tetradecanoylglycerol + H2O = tetradecanoate + glycerol + H(+). It catalyses the reaction 2-hexadecanoylglycerol + H2O = glycerol + hexadecanoate + H(+). The catalysed reaction is 1-(9Z-octadecenoyl)-glycerol + H2O = glycerol + (9Z)-octadecenoate + H(+). The enzyme catalyses 2-(9Z-octadecenoyl)-glycerol + H2O = glycerol + (9Z)-octadecenoate + H(+). It carries out the reaction 2-(9Z,12Z-octadecadienoyl)-glycerol + H2O = (9Z,12Z)-octadecadienoate + glycerol + H(+). It catalyses the reaction 1-(5Z,8Z,11Z,14Z-eicosatetraenoyl)-glycerol + H2O = glycerol + (5Z,8Z,11Z,14Z)-eicosatetraenoate + H(+). The catalysed reaction is 1-(9Z,12Z-octadecadienoyl)-glycerol + H2O = (9Z,12Z)-octadecadienoate + glycerol + H(+). The enzyme catalyses 1-hexadecanoylglycerol + H2O = glycerol + hexadecanoate + H(+). It carries out the reaction 1-octadecanoylglycerol + H2O = octadecanoate + glycerol + H(+). It catalyses the reaction prostaglandin E2 1-glyceryl ester + H2O = prostaglandin E2 + glycerol + H(+). The catalysed reaction is prostaglandin D2-1-glycerol ester + H2O = prostaglandin D2 + glycerol + H(+). The enzyme catalyses 2-glyceryl-15-deoxy-Delta(12,14)-prostaglandin J2 + H2O = 15-deoxy-Delta(12,14)-prostaglandin J2 + glycerol + H(+). It carries out the reaction prostaglandin F2alpha 1-glyceryl ester + H2O = prostaglandin F2alpha + glycerol + H(+). Its pathway is glycerolipid metabolism; triacylglycerol degradation. Its function is as follows. Converts monoacylglycerides to free fatty acids and glycerol. Hydrolyzes the endocannabinoid 2-arachidonoylglycerol, and thereby contributes to the regulation of endocannabinoid signaling, nociperception and perception of pain. Regulates the levels of fatty acids that serve as signaling molecules and promote cancer cell migration, invasion and tumor growth. In Mus musculus (Mouse), this protein is Monoglyceride lipase.